Consider the following 845-residue polypeptide: G-type lectin S-receptor-like serine/threonine-protein kinase At1g11410 (845 aa).

A signal peptide spans 1–21 (MKFFFIFFIFLFSFLIQSCYS). Residues 22–147 (DNTILRSQSL…VTGKSFWESF (126 aa)) form the Bulb-type lectin domain. Residues 22–441 (DNTILRSQSL…NGNGASGKKR (420 aa)) are Extracellular-facing. 5 N-linked (GlcNAc...) asparagine glycosylation sites follow: Asn82, Asn103, Asn185, Asn231, and Asn259. Positions 283-321 (PEDKCDIYNHCGFNGYCDSTSTEKFECSCLPGYEPKTPR) constitute an EGF-like domain. 2 disulfides stabilise this stretch: Cys287–Cys299 and Cys293–Cys309. In terms of domain architecture, PAN spans 341-424 (CNGKEGFAKL…SGQDFYLRVD (84 aa)). N-linked (GlcNAc...) asparagine glycosylation is found at Asn357, Asn366, and Asn379. 2 disulfides stabilise this stretch: Cys372-Cys399 and Cys376-Cys382. The chain crosses the membrane as a helical span at residues 442–462 (LVLILISLIAVVMLLLISFHC). Topologically, residues 463 to 845 (YLRKRRQRTQ…DVTLTDVQGR (383 aa)) are cytoplasmic. Residues 523–808 (FAFQNKLGAG…DLPSPKHPAF (286 aa)) enclose the Protein kinase domain. ATP-binding positions include 529–537 (LGAGGFGPV) and Lys551. The caM-binding stretch occupies residues 612–629 (EQRAELDWPKRMGIIRGI). Asp648 functions as the Proton acceptor in the catalytic mechanism. The tract at residues 803 to 845 (PKHPAFTAGRRRNTKTGGSSDNWPSGETSSTINDVTLTDVQGR) is disordered. The segment covering 817–845 (KTGGSSDNWPSGETSSTINDVTLTDVQGR) has biased composition (polar residues).

The protein belongs to the protein kinase superfamily. Ser/Thr protein kinase family.

It localises to the cell membrane. The enzyme catalyses L-seryl-[protein] + ATP = O-phospho-L-seryl-[protein] + ADP + H(+). It carries out the reaction L-threonyl-[protein] + ATP = O-phospho-L-threonyl-[protein] + ADP + H(+). In Arabidopsis thaliana (Mouse-ear cress), this protein is G-type lectin S-receptor-like serine/threonine-protein kinase At1g11410.